Here is a 72-residue protein sequence, read N- to C-terminus: uncharacterized protein (72 aa).

This is an uncharacterized protein from Saccharomyces cerevisiae (strain ATCC 204508 / S288c) (Baker's yeast).